The following is a 282-amino-acid chain: Elongation factor Ts (282 aa).

The segment at 80–83 is involved in Mg(2+) ion dislocation from EF-Tu; the sequence is TDFV.

It belongs to the EF-Ts family.

The protein resides in the cytoplasm. Its function is as follows. Associates with the EF-Tu.GDP complex and induces the exchange of GDP to GTP. It remains bound to the aminoacyl-tRNA.EF-Tu.GTP complex up to the GTP hydrolysis stage on the ribosome. This is Elongation factor Ts from Chlamydia trachomatis serovar L2 (strain ATCC VR-902B / DSM 19102 / 434/Bu).